Here is a 150-residue protein sequence, read N- to C-terminus: Deoxyuridine 5'-triphosphate nucleotidohydrolase (150 aa).

Residues arginine 69 to glycine 71, asparagine 82, leucine 86 to aspartate 88, and lysine 96 contribute to the substrate site.

The protein belongs to the dUTPase family. Requires Mg(2+) as cofactor.

The enzyme catalyses dUTP + H2O = dUMP + diphosphate + H(+). Its pathway is pyrimidine metabolism; dUMP biosynthesis; dUMP from dCTP (dUTP route): step 2/2. In terms of biological role, this enzyme is involved in nucleotide metabolism: it produces dUMP, the immediate precursor of thymidine nucleotides and it decreases the intracellular concentration of dUTP so that uracil cannot be incorporated into DNA. This Neisseria meningitidis serogroup A / serotype 4A (strain DSM 15465 / Z2491) protein is Deoxyuridine 5'-triphosphate nucleotidohydrolase.